Consider the following 448-residue polypeptide: Probable sodium-coupled neutral amino acid transporter 6 (448 aa).

Polar residues-rich tracts occupy residues 1–12 (MQASDSSINTLD) and 26–36 (LLANSPQRRSS). The tract at residues 1–36 (MQASDSSINTLDGHQVSAGRDESTPLLANSPQRRSS) is disordered. 5 helical membrane passes run 40–60 (SFGF…ILGL), 69–89 (ILGF…SIHL), 117–137 (LVAC…LFII), 164–184 (LLII…KIGF), and 185–205 (LGYT…VIVI). A disulfide bond links C212 and C232. N-linked (GlcNAc...) asparagine glycosylation is found at N218 and N228. Transmembrane regions (helical) follow at residues 244–264 (AFAL…LPIY), 281–301 (VGIA…YLTF), 321–341 (VLII…VPLI), 365–385 (ILVT…VPDM), 388–408 (VFGV…PGLF), and 425–445 (ACGL…LIIM).

Belongs to the amino acid/polyamine transporter 2 family.

It is found in the cell membrane. Its function is as follows. Probable sodium-dependent amino acid/proton antiporter, could be a neuronal transporter for glutamate. The polypeptide is Probable sodium-coupled neutral amino acid transporter 6 (slc38a6) (Xenopus tropicalis (Western clawed frog)).